The sequence spans 311 residues: 4-hydroxy-3-methylbut-2-enyl diphosphate reductase (311 aa).

Cys-14 is a [4Fe-4S] cluster binding site. The (2E)-4-hydroxy-3-methylbut-2-enyl diphosphate site is built by His-43 and His-76. Dimethylallyl diphosphate is bound by residues His-43 and His-76. Residues His-43 and His-76 each contribute to the isopentenyl diphosphate site. [4Fe-4S] cluster is bound at residue Cys-98. His-126 contacts (2E)-4-hydroxy-3-methylbut-2-enyl diphosphate. Residue His-126 coordinates dimethylallyl diphosphate. His-126 contacts isopentenyl diphosphate. Glu-128 serves as the catalytic Proton donor. Thr-166 provides a ligand contact to (2E)-4-hydroxy-3-methylbut-2-enyl diphosphate. Residue Cys-196 participates in [4Fe-4S] cluster binding. (2E)-4-hydroxy-3-methylbut-2-enyl diphosphate is bound by residues Ser-224, Ser-225, Asn-226, and Ser-268. Ser-224, Ser-225, Asn-226, and Ser-268 together coordinate dimethylallyl diphosphate. Residues Ser-224, Ser-225, Asn-226, and Ser-268 each coordinate isopentenyl diphosphate.

It belongs to the IspH family. [4Fe-4S] cluster serves as cofactor.

The enzyme catalyses isopentenyl diphosphate + 2 oxidized [2Fe-2S]-[ferredoxin] + H2O = (2E)-4-hydroxy-3-methylbut-2-enyl diphosphate + 2 reduced [2Fe-2S]-[ferredoxin] + 2 H(+). It carries out the reaction dimethylallyl diphosphate + 2 oxidized [2Fe-2S]-[ferredoxin] + H2O = (2E)-4-hydroxy-3-methylbut-2-enyl diphosphate + 2 reduced [2Fe-2S]-[ferredoxin] + 2 H(+). The protein operates within isoprenoid biosynthesis; dimethylallyl diphosphate biosynthesis; dimethylallyl diphosphate from (2E)-4-hydroxy-3-methylbutenyl diphosphate: step 1/1. It functions in the pathway isoprenoid biosynthesis; isopentenyl diphosphate biosynthesis via DXP pathway; isopentenyl diphosphate from 1-deoxy-D-xylulose 5-phosphate: step 6/6. In terms of biological role, catalyzes the conversion of 1-hydroxy-2-methyl-2-(E)-butenyl 4-diphosphate (HMBPP) into a mixture of isopentenyl diphosphate (IPP) and dimethylallyl diphosphate (DMAPP). Acts in the terminal step of the DOXP/MEP pathway for isoprenoid precursor biosynthesis. The protein is 4-hydroxy-3-methylbut-2-enyl diphosphate reductase of Chromobacterium violaceum (strain ATCC 12472 / DSM 30191 / JCM 1249 / CCUG 213 / NBRC 12614 / NCIMB 9131 / NCTC 9757 / MK).